Reading from the N-terminus, the 977-residue chain is Fc receptor-like protein 5 (977 aa).

A signal peptide spans 1-15 (MLLWVILLVLAPVSG). The Extracellular segment spans residues 16–851 (QFARTPRPII…ANRSGPFATG (836 aa)). 8 consecutive Ig-like C2-type domains span residues 23-101 (PIIF…LDFS), 188-271 (PFTR…SVIS), 287-374 (PVLT…LSVT), 380-463 (PVLN…KAVS), 473-556 (PVLT…EVVS), 566-651 (PILT…ISLS), 659-744 (PILT…VTLK), and 752-834 (PVLT…ETVT). Cystine bridges form between cysteine 44/cysteine 85, cysteine 211/cysteine 260, and cysteine 308/cysteine 355. The N-linked (GlcNAc...) asparagine glycan is linked to asparagine 383. Intrachain disulfides connect cysteine 401/cysteine 448, cysteine 494/cysteine 541, cysteine 587/cysteine 634, cysteine 680/cysteine 727, and cysteine 773/cysteine 819. The helical transmembrane segment at 852–872 (VAGGLLSIAGLAAGALLLYCW) threads the bilayer. The Cytoplasmic segment spans residues 873–977 (LSRKAGRKPA…LFLASSAPHR (105 aa)). The interval 879 to 898 (RKPASDPARSPSDSDSQEPT) is disordered. Residues 883–892 (SDPARSPSDS) are compositionally biased toward low complexity. 4 short sequence motifs (ITIM motif) span residues 897–902 (PTYHNV), 910–915 (PVYTNA), 922–927 (VVYSEV), and 952–957 (IIYSEV).

In terms of assembly, interacts with CR2. Interacts with CD19. In terms of tissue distribution, expressed in marginal zone B-cells, immunoblasts, tonsillar germinal center centrocytes and in the intraepithelial and interfollicular regions of the tonsil. Expressed in many lymphoma cell lines and on hairy cell leukemia cells. Isoform 1, isoform 3, isoform 4 and isoform 5 are detected in lymph node, spleen, bone marrow, and small intestine with preponderance of isoform 3. Expressed in mature and memory B-cells and down-regulated in germinal center cells (at protein level).

It is found in the cell membrane. Functionally, plays an important role in B-cell response to antigen that acts both as a negative or positive coreceptor. Inhibits B-cell receptor (BCR) signaling in the absence of CR2 stimulation but engagement with CR2 and the BCR lead to a superior calcium response compared to CR2 and BCR costimulation. May be involved in B-cell development and differentiation in peripheral lymphoid organs and may be useful markers of B-cell stages. May have an immunoregulatory role in marginal zone B-cells. May play a role in fertilization. The protein is Fc receptor-like protein 5 (FCRL5) of Homo sapiens (Human).